A 469-amino-acid polypeptide reads, in one-letter code: ATP synthase subunit beta (469 aa).

155 to 162 provides a ligand contact to ATP; it reads GGAGVGKT.

It belongs to the ATPase alpha/beta chains family. In terms of assembly, F-type ATPases have 2 components, CF(1) - the catalytic core - and CF(0) - the membrane proton channel. CF(1) has five subunits: alpha(3), beta(3), gamma(1), delta(1), epsilon(1). CF(0) has three main subunits: a(1), b(2) and c(9-12). The alpha and beta chains form an alternating ring which encloses part of the gamma chain. CF(1) is attached to CF(0) by a central stalk formed by the gamma and epsilon chains, while a peripheral stalk is formed by the delta and b chains.

The protein localises to the cell inner membrane. It catalyses the reaction ATP + H2O + 4 H(+)(in) = ADP + phosphate + 5 H(+)(out). In terms of biological role, produces ATP from ADP in the presence of a proton gradient across the membrane. The catalytic sites are hosted primarily by the beta subunits. This chain is ATP synthase subunit beta, found in Helicobacter pylori (strain P12).